The sequence spans 428 residues: Protein ECERIFERUM 26 (428 aa).

A disordered region spans residues 1–36 (MGRSQEQGQGQGPVHSIRLSTVGATRPTETGTTHEP). Residues 21–36 (TVGATRPTETGTTHEP) are compositionally biased toward low complexity.

This sequence belongs to the plant acyltransferase family. As to expression, highly expressed in leaves.

The protein localises to the cytoplasm. It is found in the cytosol. Involved in biosynthesis of the epicuticular wax. Plays a role in very-long-chain fatty acid (VLCFA) biosynthesis and is required for C30 fatty acid elongation in leaf. Despite its classification as a BAHD acyltransferase based on sequence homology, CER26 does not seem to share the catalytic mechanism of the members of the BAHD family. The chain is Protein ECERIFERUM 26 (CER26) from Arabidopsis thaliana (Mouse-ear cress).